The primary structure comprises 462 residues: Nitrogenase iron-iron protein beta chain (462 aa).

Residues C20, C45, C104, and S143 each contribute to the [8Fe-7S] cluster site.

This sequence belongs to the NifD/NifK/NifE/NifN family. As to quaternary structure, hexamer of two alpha, two beta, and two delta chains. [8Fe-7S] cluster serves as cofactor.

It carries out the reaction N2 + 8 reduced [2Fe-2S]-[ferredoxin] + 16 ATP + 16 H2O = H2 + 8 oxidized [2Fe-2S]-[ferredoxin] + 2 NH4(+) + 16 ADP + 16 phosphate + 6 H(+). This iron-iron protein is part of the nitrogenase complex that catalyzes the key enzymatic reactions in nitrogen fixation. Other nitrogenase complexes utilize a molybdenum-iron protein or a vanadium-iron protein. In Azotobacter vinelandii, this protein is Nitrogenase iron-iron protein beta chain (anfK).